The primary structure comprises 674 residues: Protein asunder (674 aa).

Residues 516–538 adopt a coiled-coil conformation; that stretch reads HKAKDQYRLLYRELEQLIQLNAS. The Nuclear localization signal (NLS) signature appears at 601 to 607; that stretch reads LKASKRR.

The protein belongs to the Integrator subunit 13 family. In terms of assembly, belongs to the multiprotein complex Integrator, at least composed of IntS1, IntS2, IntS3, IntS4, omd/IntS5, IntS6, defl/IntS7, IntS8, IntS9, IntS10, IntS11, IntS12, asun/IntS13, IntS14 and IntS15. The core complex associates with protein phosphatase 2A subunits mts/PP2A and Pp2A-29B, to form the Integrator-PP2A (INTAC) complex. Phosphorylated.

The protein localises to the nucleus. Its subcellular location is the cytoplasm. The protein resides in the perinuclear region. Functionally, component of the integrator complex, a multiprotein complex that terminates RNA polymerase II (Pol II) transcription in the promoter-proximal region of genes. The integrator complex provides a quality checkpoint during transcription elongation by driving premature transcription termination of transcripts that are unfavorably configured for transcriptional elongation: the complex terminates transcription by (1) catalyzing dephosphorylation of the C-terminal domain (CTD) of Pol II subunit Polr2A/Rbp1 and Spt5, and (2) degrading the exiting nascent RNA transcript via endonuclease activity. The integrator complex is also involved in the 3'-end processing of the U7 snRNA, and also the spliceosomal snRNAs U1, U2, U4 and U5. In Drosophila persimilis (Fruit fly), this protein is Protein asunder (asun).